A 589-amino-acid polypeptide reads, in one-letter code: Kelch-like protein 25 (589 aa).

Residues 46-114 form the BTB domain; sequence TDVTLWAGDR…AYSSRIVINE (69 aa). Positions 149-250 constitute a BACK domain; that stretch reads CLGMMVLSDA…LPSDCLKNAV (102 aa). 6 Kelch repeats span residues 296–340, 341–388, 389–444, 446–492, 493–538, and 539–585; these read TLLI…AIGC, KVYV…ELEN, CLYV…SAKL, LFVF…VLGS, QIFI…ASGN, and KLYV…STWK.

Component of the BCR(KLHL25) E3 ubiquitin ligase complex, at least composed of CUL3, KLHL25 and RBX1.

Its pathway is protein modification; protein ubiquitination. Substrate-specific adapter of a BCR (BTB-CUL3-RBX1) E3 ubiquitin ligase complex involved in various processes, such as translation homeostasis and lipid synthesis. The BCR(KLHL25) ubiquitin ligase complex acts by mediating ubiquitination of hypophosphorylated EIF4EBP1 (4E-BP1): ubiquitination and subsequent degradation of hypophosphorylated EIF4EBP1 (4E-BP1) probably serves as a homeostatic mechanism to maintain translation and prevent eIF4E inhibition when eIF4E levels are low. The BCR(KLHL25) complex does not target EIF4EBP1 (4E-BP1) when it is hyperphosphorylated or associated with eIF4E. The BCR(KLHL25) complex also acts as a regulator of lipid synthesis by mediating ubiquitination and degradation of ACLY, thereby inhibiting lipid synthesis. BCR(KLHL25)-mediated degradation of ACLY promotes fatty acid oxidation and is required for differentiation of inducible regulatory T (iTreg) cells. The sequence is that of Kelch-like protein 25 from Mus musculus (Mouse).